A 714-amino-acid polypeptide reads, in one-letter code: MQEHIQSISFDGREIRLKTGLFAPQAGGSVLIESGDTAVLVSATTAPGRQGIDFLPLLVDYEERLYAAGRIPGGYLRREGRPPERATLISRLIDRPMRPLFPQWLRDDIQIVATTLSLDEEVPPDVLAVTGASVATLLAGLPFYGPMAAVRVGLVGDDFILNPTYREMMNGDLDLVVAGTPDGVIMVEAGANQLPEADMIEAIDFAYEAIQELIEAQRALMKELGVEMVSAEPPAKDEELEKFIGDRTTDKIKKVLSQFDLDKNGRDAALDEIKATEIIEAIEALPEDAPLRLKTTEEPKLIDNTFKALTKKLMRSQIVEDGVRVDGRKLDQVRPISCRTAVLPRAVHGSGLFNRGLTQVLSIATLGTPGDAQEMDDLHPSDEKRYLHHYNFPPYSVGETRPMRSPGRREIGHGALAERALLPVLPPKDEFPYVIRVVSEVLSSNGSTSMGSVCGSTLALMDAGVPIAKPVSGAAMGLIKEGKEVRILTDIQGIEDFLGDMDFKVAGTADGITALQMDMKITGLAVEVVAEAIKQALPARLHILEKMTDVIAEPKELSPAAPRLLTIKIDPDLIGMVIGPGGKTIKGITEQTRAKVDIADDGTVTIASSESENAEKAKRLIVNMTRKLNEGDVYFGKVTRIIQIGAFVEIMPGKEGMIHISQLAEGRVGKVEDEVAVGDEVVVKVREIDNKGRINLTRLGIHPDEAAAARVAAQ.

The Mg(2+) site is built by D496 and D502. Residues 562 to 621 (PRLLTIKIDPDLIGMVIGPGGKTIKGITEQTRAKVDIADDGTVTIASSESENAEKAKRLI) enclose the KH domain. Residues 631 to 699 (GDVYFGKVTR…NKGRINLTRL (69 aa)) form the S1 motif domain.

The protein belongs to the polyribonucleotide nucleotidyltransferase family. Mg(2+) is required as a cofactor.

It localises to the cytoplasm. It carries out the reaction RNA(n+1) + phosphate = RNA(n) + a ribonucleoside 5'-diphosphate. Its function is as follows. Involved in mRNA degradation. Catalyzes the phosphorolysis of single-stranded polyribonucleotides processively in the 3'- to 5'-direction. The chain is Polyribonucleotide nucleotidyltransferase from Picosynechococcus sp. (strain ATCC 27264 / PCC 7002 / PR-6) (Agmenellum quadruplicatum).